The sequence spans 219 residues: Small ribosomal subunit protein uS3c (219 aa).

Residues 39–109 form the KH type-2 domain; it reads IRQYIEKNLS…QIRINVIEVK (71 aa).

The protein belongs to the universal ribosomal protein uS3 family. Part of the 30S ribosomal subunit.

Its subcellular location is the plastid. It localises to the cyanelle. The protein is Small ribosomal subunit protein uS3c (rps3) of Cyanophora paradoxa.